The primary structure comprises 414 residues: Peptidoglycan beta-N-acetylmuramidase NamZ (414 aa).

An N-terminal signal peptide occupies residues 1–23 (MRKTIFAFLTGLMMFGTITAASA).

It belongs to the glycoside hydrolase 171 family. Homodimer in solution.

It is found in the secreted. It catalyses the reaction Hydrolysis of terminal, non-reducing N-acetylmuramic residues.. In terms of biological role, catalyzes the exo-lytic cleavage of beta-1,4-N-acetylmuramate (beta-1,4-MurNAc) from the non-reducing ends of peptidoglycan chains. Specifically hydrolyzes the natural, peptidoglycan-derived disaccharide MurNAc-GlcNAc and the artificial substrate para-nitrophenyl beta-N-acetylmuramic acid (pNP-MurNAc). Requires a MurNAc entity at the non-reducing end, and cannot cleave GlcNAc-MurNAc. Probably plays a role in cell wall turnover and recycling. This chain is Peptidoglycan beta-N-acetylmuramidase NamZ, found in Bacillus subtilis (strain 168).